Here is a 350-residue protein sequence, read N- to C-terminus: Serine-threonine kinase receptor-associated protein (350 aa).

WD repeat units lie at residues 12-56, 57-96, 98-137, 141-179, 180-212, 221-262, and 263-302; these read GHTR…GTFL, GHKGAVWGATLNKDATKAATAAADFTAKVWDAVSGDELMT, AHKHIVKTVDFTQDSNYLLTGGQDKLLRIYDLNKPEAEPK, GHTSGIKKALWCSEDKQILSADDKTVRLWDHATMTEVKS, LNFNMSVSSMEYIPEGEILVITYGRSIAFHSAV, EAPA…ESYK, and GHFGPIHCVRFSPDGELYASGSEDGTLRLWQTVVGKTYGL. Phosphoserine is present on residues Ser312, Ser335, and Ser338. The disordered stretch occupies residues 327 to 350; it reads EEELEEIASENSDSIYSSTPEVKA. The segment covering 337 to 350 has biased composition (polar residues); it reads NSDSIYSSTPEVKA. Position 342 is a phosphotyrosine (Tyr342).

Belongs to the WD repeat STRAP family. As to quaternary structure, part of the core SMN complex that contains SMN1, GEMIN2/SIP1, DDX20/GEMIN3, GEMIN4, GEMIN5, GEMIN6, GEMIN7, GEMIN8 and STRAP/UNRIP. Part of the SMN-Sm complex that contains SMN1, GEMIN2/SIP1, DDX20/GEMIN3, GEMIN4, GEMIN5, GEMIN6, GEMIN7, GEMIN8, STRAP/UNRIP and the Sm proteins SNRPB, SNRPD1, SNRPD2, SNRPD3, SNRPE, SNRPF and SNRPG. Interacts directly with GEMIN6 and GEMIN7. Associates with the SMN complex in the cytoplasm but not in the nucleus. Also interacts with CSDE1/UNR and MAWBP. Interacts with PDPK1. Interacts with TRIM48.

The protein localises to the cytoplasm. It localises to the nucleus. Its function is as follows. The SMN complex catalyzes the assembly of small nuclear ribonucleoproteins (snRNPs), the building blocks of the spliceosome, and thereby plays an important role in the splicing of cellular pre-mRNAs. Most spliceosomal snRNPs contain a common set of Sm proteins SNRPB, SNRPD1, SNRPD2, SNRPD3, SNRPE, SNRPF and SNRPG that assemble in a heptameric protein ring on the Sm site of the small nuclear RNA to form the core snRNP (Sm core). In the cytosol, the Sm proteins SNRPD1, SNRPD2, SNRPE, SNRPF and SNRPG are trapped in an inactive 6S pICln-Sm complex by the chaperone CLNS1A that controls the assembly of the core snRNP. To assemble core snRNPs, the SMN complex accepts the trapped 5Sm proteins from CLNS1A forming an intermediate. Binding of snRNA inside 5Sm triggers eviction of the SMN complex, thereby allowing binding of SNRPD3 and SNRPB to complete assembly of the core snRNP. STRAP plays a role in the cellular distribution of the SMN complex. Negatively regulates TGF-beta signaling but positively regulates the PDPK1 kinase activity by enhancing its autophosphorylation and by significantly reducing the association of PDPK1 with 14-3-3 protein. The chain is Serine-threonine kinase receptor-associated protein (STRAP) from Bos taurus (Bovine).